The sequence spans 23 residues: ALGGVLKALAKGLPSVISWINQK.

At Lys23 the chain carries Lysine amide.

As to expression, expressed by the skin glands.

Its subcellular location is the secreted. The polypeptide is Melittin-related peptide AK-23-1 (Rana arvalis (Moor frog)).